The following is an 879-amino-acid chain: Alanine--tRNA ligase (879 aa).

4 residues coordinate Zn(2+): histidine 566, histidine 570, cysteine 668, and histidine 672.

It belongs to the class-II aminoacyl-tRNA synthetase family. Requires Zn(2+) as cofactor.

The protein resides in the cytoplasm. It carries out the reaction tRNA(Ala) + L-alanine + ATP = L-alanyl-tRNA(Ala) + AMP + diphosphate. In terms of biological role, catalyzes the attachment of alanine to tRNA(Ala) in a two-step reaction: alanine is first activated by ATP to form Ala-AMP and then transferred to the acceptor end of tRNA(Ala). Also edits incorrectly charged Ser-tRNA(Ala) and Gly-tRNA(Ala) via its editing domain. The chain is Alanine--tRNA ligase from Clostridium perfringens (strain ATCC 13124 / DSM 756 / JCM 1290 / NCIMB 6125 / NCTC 8237 / Type A).